The following is a 1013-amino-acid chain: Chitin synthase A (1013 aa).

The N-linked (GlcNAc...) asparagine glycan is linked to Asn10. Disordered stretches follow at residues 26-83 (RYSY…AADW) and 95-218 (ERAD…RRGV). Residues 64 to 81 (TASRPASPARPWSPTRAA) are compositionally biased toward low complexity. Polar residues predominate over residues 154-173 (TISSRHGPQGSVQSFTSEST). Residues Asn194 and Asn316 are each glycosylated (N-linked (GlcNAc...) asparagine). A run of 5 helical transmembrane segments spans residues 646 to 666 (LLQLIFTYFGLANFYLAFFFI), 686 to 706 (IFIVLRYACVLVMCLQFIFSM), 721 to 741 (MIVYSIVMAYTAFCTLYLIVL), 759 to 779 (LFVNIVVSLLSTVGLYFFTSF), and 792 to 811 (AQYFALLPSYICTLQCYAFC). Asn837 is a glycosylation site (N-linked (GlcNAc...) asparagine). Transmembrane regions (helical) follow at residues 892–912 (VSVWMVANVVLAMAVSEVYGV) and 919–939 (VYLAIILWSVAVLAIIRAIGS). N-linked (GlcNAc...) asparagine glycans are attached at residues Asn967, Asn980, Asn989, and Asn995.

Belongs to the chitin synthase family. Class II subfamily. As to expression, mainly expressed in the metulae, phialides, and conidia.

It is found in the cell membrane. It localises to the cell septum. It carries out the reaction [(1-&gt;4)-N-acetyl-beta-D-glucosaminyl](n) + UDP-N-acetyl-alpha-D-glucosamine = [(1-&gt;4)-N-acetyl-beta-D-glucosaminyl](n+1) + UDP + H(+). Its function is as follows. Polymerizes chitin, a structural polymer of the cell wall and septum, by transferring the sugar moiety of UDP-GlcNAc to the non-reducing end of the growing chitin polymer. Seems not to be involved in hyphal growth, but, with chsC, chsA shares critical functions in hyphal wall integrity and differentiation. ChsA and chsC share also overlapping roles in septum formation. Invoved in the production of the asexual spores (conidia) that are formed by differentiated aerial hyphae called conidiophores. In Emericella nidulans (strain FGSC A4 / ATCC 38163 / CBS 112.46 / NRRL 194 / M139) (Aspergillus nidulans), this protein is Chitin synthase A.